Consider the following 386-residue polypeptide: Diaminopimelate decarboxylase (386 aa).

The residue at position 46 (lysine 46) is an N6-(pyridoxal phosphate)lysine. Pyridoxal 5'-phosphate-binding positions include glycine 214 and glutamate 246 to arginine 249. Substrate is bound by residues arginine 249, arginine 285, and tyrosine 289. Residue cysteine 314 is the Proton donor of the active site. Substrate-binding residues include glutamate 315 and tyrosine 343. Tyrosine 343 is a pyridoxal 5'-phosphate binding site.

This sequence belongs to the Orn/Lys/Arg decarboxylase class-II family. LysA subfamily. As to quaternary structure, homodimer. Requires pyridoxal 5'-phosphate as cofactor.

It carries out the reaction meso-2,6-diaminopimelate + H(+) = L-lysine + CO2. Its pathway is amino-acid biosynthesis; L-lysine biosynthesis via DAP pathway; L-lysine from DL-2,6-diaminopimelate: step 1/1. Functionally, specifically catalyzes the decarboxylation of meso-diaminopimelate (meso-DAP) to L-lysine. This Thermotoga maritima (strain ATCC 43589 / DSM 3109 / JCM 10099 / NBRC 100826 / MSB8) protein is Diaminopimelate decarboxylase.